A 756-amino-acid chain; its full sequence is 1-phosphatidylinositol 4,5-bisphosphate phosphodiesterase delta-1 (756 aa).

The PH domain occupies Ala-21–His-130. A substrate binding region spans residues Lys-30–Lys-57. 2 EF-hand domains span residues Lys-140–Gln-175 and Val-176–Arg-211. Positions 153, 155, 157, 159, 164, 189, 191, 193, 195, and 200 each coordinate Ca(2+). O-linked (GlcNAc) serine glycosylation occurs at Ser-191. An O-linked (GlcNAc) threonine glycan is attached at Thr-193. Residues Gln-296–Lys-440 enclose the PI-PLC X-box domain. The active site involves His-311. Residues Asn-312, Glu-341, and Asp-343 each contribute to the Ca(2+) site. His-356 is a catalytic residue. Position 390 (Glu-390) interacts with Ca(2+). The substrate site is built by Lys-438 and Lys-440. Thr-457 bears the Phosphothreonine mark. The residue at position 460 (Ser-460) is a Phosphoserine. The PI-PLC Y-box domain occupies Leu-492–Arg-609. Ser-522 and Arg-549 together coordinate substrate. The region spanning Pro-611–Ser-737 is the C2 domain. Ca(2+) contacts are provided by Ile-651, Asp-653, Asn-677, Asp-706, Tyr-707, and Asp-708.

As to quaternary structure, interacts with TGM2. It depends on Ca(2+) as a cofactor. Strongly expressed in lung, liver and heart. Also expressed at least in pancreas, kidney, skeletal muscle, placenta and brain.

It carries out the reaction a 1,2-diacyl-sn-glycero-3-phospho-(1D-myo-inositol-4,5-bisphosphate) + H2O = 1D-myo-inositol 1,4,5-trisphosphate + a 1,2-diacyl-sn-glycerol + H(+). The catalysed reaction is a 1,2-diacyl-sn-glycero-3-phospho-(1D-myo-inositol) + H2O = 1D-myo-inositol 1-phosphate + a 1,2-diacyl-sn-glycerol + H(+). In terms of biological role, the production of the second messenger molecules diacylglycerol (DAG) and inositol 1,4,5-trisphosphate (IP3) is mediated by activated phosphatidylinositol-specific phospholipase C enzymes. Essential for trophoblast and placental development. Binds phosphatidylinositol 4,5-bisphosphate. This is 1-phosphatidylinositol 4,5-bisphosphate phosphodiesterase delta-1 from Homo sapiens (Human).